The sequence spans 131 residues: Small ribosomal subunit protein uS8 (131 aa).

This sequence belongs to the universal ribosomal protein uS8 family. As to quaternary structure, part of the 30S ribosomal subunit. Contacts proteins S5 and S12.

Its function is as follows. One of the primary rRNA binding proteins, it binds directly to 16S rRNA central domain where it helps coordinate assembly of the platform of the 30S subunit. This Leptothrix cholodnii (strain ATCC 51168 / LMG 8142 / SP-6) (Leptothrix discophora (strain SP-6)) protein is Small ribosomal subunit protein uS8.